The following is a 237-amino-acid chain: Probable S-methyl-5'-thioinosine phosphorylase (237 aa).

Phosphate is bound by residues threonine 12 and 54 to 55 (RH). Methionine 187 provides a ligand contact to substrate. Threonine 188 contributes to the phosphate binding site. A substrate-binding site is contributed by 211 to 213 (NWA).

Belongs to the PNP/MTAP phosphorylase family. MTAP subfamily. In terms of assembly, homotrimer.

The catalysed reaction is S-methyl-5'-thioinosine + phosphate = 5-(methylsulfanyl)-alpha-D-ribose 1-phosphate + hypoxanthine. Its pathway is purine metabolism; purine nucleoside salvage. In terms of biological role, catalyzes the reversible phosphorylation of S-methyl-5'-thioinosine (MTI) to hypoxanthine and 5-methylthioribose-1-phosphate. Involved in the breakdown of S-methyl-5'-thioadenosine (MTA), a major by-product of polyamine biosynthesis. Catabolism of (MTA) occurs via deamination to MTI and phosphorolysis to hypoxanthine. The sequence is that of Probable S-methyl-5'-thioinosine phosphorylase from Xylella fastidiosa (strain 9a5c).